The chain runs to 286 residues: MTIFAKDKLIAYGQLMRLDKPIGTLLLLWPTLWALYLAEKAMPTLSVLAIFIFGVFLMRSAGCVINDYADRHIDGKVKRTSLRPLSTGRATPREAKWLFIVLVFCSFLLVLCLNLYTIGLSVIAVILAFIYPFMKRYTHLPQFFLGAAFGWSIPMAYGATIEALPLECWLLFIANLSWTVAYDTQYAMVDRDDDLRIGVKSTAILFAQYDNKIIALLQIITLIFLFSVGYLSQLNNRYFIVLAIAGLFFVYQCRLTKNRDRESCFNAFLNNNYFGLTVFIAVLFGI.

The next 7 helical transmembrane spans lie at 22–42, 45–65, 98–118, 143–163, 213–233, 238–255, and 266–286; these read IGTL…EKAM, LSVL…GCVI, LFIV…LYTI, FFLG…TIEA, IIAL…YLSQ, YFIV…QCRL, and NAFL…LFGI.

The protein belongs to the UbiA prenyltransferase family. Requires Mg(2+) as cofactor.

The protein resides in the cell inner membrane. The enzyme catalyses all-trans-octaprenyl diphosphate + 4-hydroxybenzoate = 4-hydroxy-3-(all-trans-octaprenyl)benzoate + diphosphate. It participates in cofactor biosynthesis; ubiquinone biosynthesis. In terms of biological role, catalyzes the prenylation of para-hydroxybenzoate (PHB) with an all-trans polyprenyl group. Mediates the second step in the final reaction sequence of ubiquinone-8 (UQ-8) biosynthesis, which is the condensation of the polyisoprenoid side chain with PHB, generating the first membrane-bound Q intermediate 3-octaprenyl-4-hydroxybenzoate. The sequence is that of 4-hydroxybenzoate octaprenyltransferase from Histophilus somni (strain 2336) (Haemophilus somnus).